The sequence spans 744 residues: 1,4-alpha-glucan branching enzyme GlgB (744 aa).

The interval 1–23 (MSGPEDPADRRHGEVPAPRRDIP) is disordered. The span at 7–23 (PADRRHGEVPAPRRDIP) shows a compositional bias: basic and acidic residues. The active-site Nucleophile is aspartate 424. Glutamate 476 functions as the Proton donor in the catalytic mechanism.

Belongs to the glycosyl hydrolase 13 family. GlgB subfamily. As to quaternary structure, monomer.

It catalyses the reaction Transfers a segment of a (1-&gt;4)-alpha-D-glucan chain to a primary hydroxy group in a similar glucan chain.. It participates in glycan biosynthesis; glycogen biosynthesis. Functionally, catalyzes the formation of the alpha-1,6-glucosidic linkages in glycogen by scission of a 1,4-alpha-linked oligosaccharide from growing alpha-1,4-glucan chains and the subsequent attachment of the oligosaccharide to the alpha-1,6 position. This chain is 1,4-alpha-glucan branching enzyme GlgB, found in Nocardia farcinica (strain IFM 10152).